Here is a 156-residue protein sequence, read N- to C-terminus: Ribosomal RNA large subunit methyltransferase H (156 aa).

S-adenosyl-L-methionine-binding positions include Leu-73, Gly-104, and 123 to 128 (LSPLTL).

This sequence belongs to the RNA methyltransferase RlmH family. In terms of assembly, homodimer.

The protein localises to the cytoplasm. It carries out the reaction pseudouridine(1915) in 23S rRNA + S-adenosyl-L-methionine = N(3)-methylpseudouridine(1915) in 23S rRNA + S-adenosyl-L-homocysteine + H(+). Specifically methylates the pseudouridine at position 1915 (m3Psi1915) in 23S rRNA. This Sodalis glossinidius (strain morsitans) protein is Ribosomal RNA large subunit methyltransferase H.